The chain runs to 245 residues: Probable transcriptional regulatory protein CPR_1922 (245 aa).

The protein belongs to the TACO1 family.

It is found in the cytoplasm. This chain is Probable transcriptional regulatory protein CPR_1922, found in Clostridium perfringens (strain SM101 / Type A).